A 1188-amino-acid polypeptide reads, in one-letter code: MAGHEVRYGKHRTRRSFSRIKEVLDLPNLIEIQTDSFQDFLDSGLKEVFEDVLPISNFTDTMELEFVGYEFKEPKYTLEEARIHDASYSAPIFVTFRLVNKETGEIKTQEVFFGDFPIMTEMGTFIINGGERIIVSQLVRSPGVYFNDKVDKNGKVGYGSTVIPNRGAWLELETDSKDIAYTRIDRTRKIPFTTLVRALGFSGDDEIVDIFGESDLVRNTIEKDIHKNPSDSRTDEALKEIYERLRPGEPKTADSSRSLLIARFFDARRYDLAAVGRYKVNKKLNIKTRLLNQIIAENLVDAETGEILVEAGTEMTRSVIESIEEHLDGDLNKFVYTPNDYAVVTEPVVLQKFKVVSPIDPDRVVTIVGNANPDDKVRALTPADILAEMSYFLNLAEGLGKVDDIDHLGNRRIRAVGELLANQFRIGLARMERNVRERMSVQDNDVLTPQQIINIRPVTAAVKEFFGSSQLSQFMDQHNPLSELSHKRRLSALGPGGLTRDRAGYEVRDVHYTHYGRMCPIETPEGPNIGLINNLSSFGHLNKYGFIQTPYRKVDRATGTVTNEIVWLTADEEDEYTVAQANSKLNEDGTFAEEIVMGRHQGNNQEFSASVVDFVDVSPKQVVAVATACIPFLENDDSNRALMGANMQRQAVPLIDPKAPYVGTGMEYQAAHDSGAAVIAQHNGKVVFSDAEKVEIRRQDGSLDVYHITKFRRSNSGTAYNQRTLVKVGDIVEKGDFIADGPSMENGEMALGQNPVVAYMTWEGYNFEDAVIMSERLVKEDVYTSVHLEEFESETRDTKLGPEEITREIPNVGEEALKDLDEMGIIRIGAEVKEGDILVGKVTPKGEKDLSAEERLLHAIFGDKSREVRDTSLRVPHGGDGIVRDVKIFTRANGDELQSGVNMLVRVYIAQKRKIKVGDKMAGRHGNKGVVSRIVPVEDMPYLPDGTPVDIMLNPLGVPSRMNIGQVMELHLGMAARNLGIHIATPVFDGASSEDLWDTVREAGMDSDAKTVLYDGRTGEPFDNRVSVGVMYMIKLHHMVDDKLHARSVGPYSLVTQQPLGGKAQFGGQRFGEMEVWALEAYGASNVLQEILTYKSDDVTGRLKAYEAITKGKPIPKPGVPESFRVLVKELQSLGLDMRVLDEDDNEVELRDLDEGEDDDIMHVDDLEKAREKQAQETQEVSETTDEK.

Belongs to the RNA polymerase beta chain family. In terms of assembly, the RNAP catalytic core consists of 2 alpha, 1 beta, 1 beta' and 1 omega subunit. When a sigma factor is associated with the core the holoenzyme is formed, which can initiate transcription.

The enzyme catalyses RNA(n) + a ribonucleoside 5'-triphosphate = RNA(n+1) + diphosphate. Functionally, DNA-dependent RNA polymerase catalyzes the transcription of DNA into RNA using the four ribonucleoside triphosphates as substrates. In Streptococcus pyogenes serotype M18 (strain MGAS8232), this protein is DNA-directed RNA polymerase subunit beta.